The primary structure comprises 109 residues: Class I hydrophobin 2 (109 aa).

The first 18 residues, 1-18 (MQFKLAFVSIALATLAVA), serve as a signal peptide directing secretion. Cystine bridges form between Cys-30–Cys-90, Cys-37–Cys-84, Cys-38–Cys-71, and Cys-91–Cys-104.

It belongs to the fungal hydrophobin family. As to quaternary structure, self-assembles to form functional amyloid fibrils called rodlets. Self-assembly into fibrillar rodlets occurs spontaneously at hydrophobic:hydrophilic interfaces and the rodlets further associate laterally to form amphipathic monolayers.

The protein localises to the secreted. It localises to the cell wall. Its function is as follows. Aerial growth, conidiation, and dispersal of filamentous fungi in the environment rely upon a capability of their secreting small amphipathic proteins called hydrophobins (HPBs) with low sequence identity. Class I can self-assemble into an outermost layer of rodlet bundles on aerial cell surfaces, conferring cellular hydrophobicity that supports fungal growth, development and dispersal; whereas Class II form highly ordered films at water-air interfaces through intermolecular interactions but contribute nothing to the rodlet structure. Hyd2 is a class I hydrophobin that may allow the dikaryotic mycelia to attach to the hydrophobic surface of the substrate. Higher expression in dikaryotic mycelia than in monokaryotic mycelia indicates that dikaryons require more hyd2 hydrophobin than the monokaryons, presumably for a higher rate of hyphal growth. This is Class I hydrophobin 2 from Lentinula edodes (Shiitake mushroom).